A 442-amino-acid chain; its full sequence is Serine hydroxymethyltransferase (442 aa).

Residues Y54, 100 to 102, and H236 contribute to the pyridoxal 5'-phosphate site; that span reads SGS. C125 and C364 are joined by a disulfide. At K237 the chain carries N6-(pyridoxal phosphate)lysine. G272 serves as a coordination point for pyridoxal 5'-phosphate.

The protein belongs to the SHMT family. In terms of assembly, homodimer. The cofactor is pyridoxal 5'-phosphate.

The protein localises to the cytoplasm. It is found in the mitochondrion matrix. It localises to the plastid. The protein resides in the apicoplast. Its subcellular location is the nucleus. It catalyses the reaction (6R)-5,10-methylene-5,6,7,8-tetrahydrofolate + glycine + H2O = (6S)-5,6,7,8-tetrahydrofolate + L-serine. It functions in the pathway one-carbon metabolism; tetrahydrofolate interconversion. Redox regulation; active in reducing conditions, inactive in oxidizing conditions. The reduction of the cysteine pairs allows the access binding of the tetrahydrofolate substrate to its binding site. This mechanism appears to be unique to Plasmodium species. In terms of biological role, catalyzes the interconversion of serine to glycine accompanied with the production of 5,10-methylenetetrahydrofolate, a source of one-carbon units used by thymidylate synthase to convert dUMP to dTMP for DNA synthesis. Binds to its own mRNA and to the mRNA of bifunctional dihydrofolate reductase-thymidylate synthase (DHFR-TS) in vitro; the physiological relevance of this interaction is not clear. The chain is Serine hydroxymethyltransferase from Plasmodium falciparum (isolate 3D7).